A 123-amino-acid chain; its full sequence is Unclassified hydrophobin 9 (123 aa).

Residues 1-24 form the signal peptide; sequence MFFFNTKPIVFLVVLSVVATFAAA. 4 disulfides stabilise this stretch: Cys37/Cys103, Cys45/Cys97, Cys46/Cys88, and Cys104/Cys117.

This sequence belongs to the fungal hydrophobin family. Self-assembles to form functional amyloid fibrils called rodlets. Self-assembly into fibrillar rodlets occurs spontaneously at hydrophobic:hydrophilic interfaces and the rodlets further associate laterally to form amphipathic monolayers.

It localises to the secreted. Its subcellular location is the cell wall. Functionally, aerial growth, conidiation, and dispersal of filamentous fungi in the environment rely upon a capability of their secreting small amphipathic proteins called hydrophobins (HPBs) with low sequence identity. Class I can self-assemble into an outermost layer of rodlet bundles on aerial cell surfaces, conferring cellular hydrophobicity that supports fungal growth, development and dispersal; whereas Class II form highly ordered films at water-air interfaces through intermolecular interactions but contribute nothing to the rodlet structure. This chain is Unclassified hydrophobin 9, found in Pleurotus ostreatus (strain PC15) (Oyster mushroom).